Here is a 131-residue protein sequence, read N- to C-terminus: Small ribosomal subunit protein uS8 (131 aa).

It belongs to the universal ribosomal protein uS8 family. As to quaternary structure, part of the 30S ribosomal subunit. Contacts proteins S5 and S12.

Functionally, one of the primary rRNA binding proteins, it binds directly to 16S rRNA central domain where it helps coordinate assembly of the platform of the 30S subunit. In Vesicomyosocius okutanii subsp. Calyptogena okutanii (strain HA), this protein is Small ribosomal subunit protein uS8.